We begin with the raw amino-acid sequence, 464 residues long: Mannose-1-phosphate guanylyltransferase (464 aa).

It belongs to the mannose-6-phosphate isomerase type 2 family.

The enzyme catalyses alpha-D-mannose 1-phosphate + GTP + H(+) = GDP-alpha-D-mannose + diphosphate. It functions in the pathway nucleotide-sugar biosynthesis; GDP-alpha-D-mannose biosynthesis; GDP-alpha-D-mannose from alpha-D-mannose 1-phosphate (GTP route): step 1/1. Its pathway is bacterial outer membrane biogenesis; LPS O-antigen biosynthesis. Functionally, involved in GDP-mannose biosynthesis which serves as the activated sugar nucleotide precursor for mannose residues in cell surface polysaccharides. This enzyme participates in synthesis of the LPS O7 antigen. The polypeptide is Mannose-1-phosphate guanylyltransferase (manC) (Escherichia coli).